Consider the following 394-residue polypeptide: Methane monooxygenase component A beta chain (394 aa).

As to quaternary structure, m.trichosporium has two forms of methane monooxygenase, a soluble and a membrane-bound type. The soluble type consists of four components (A to D): protein A, comprising three chains, in an alpha-2, beta-2, gamma-2 configuration, is a nonheme iron protein containing an unusual mu-hydroxo bridge structure at its active site and interacts with both oxygen and methane.

It catalyses the reaction methane + NADH + O2 + H(+) = methanol + NAD(+) + H2O. The catalysed reaction is methane + NADPH + O2 + H(+) = methanol + NADP(+) + H2O. Its function is as follows. Responsible for the initial oxygenation of methane to methanol in methanotrophs. It also catalyzes the monohydroxylation of a variety of unactivated alkenes, alicyclic, aromatic and heterocyclic compounds. This is Methane monooxygenase component A beta chain (mmoY) from Methylosinus trichosporium.